Here is a 298-residue protein sequence, read N- to C-terminus: Inosose dehydratase 1 (298 aa).

It belongs to the IolE/MocC family. Requires glutathione as cofactor. Co(2+) is required as a cofactor. Mn(2+) serves as cofactor.

It carries out the reaction scyllo-inosose = 3D-3,5/4-trihydroxycyclohexane-1,2-dione + H2O. It functions in the pathway polyol metabolism; myo-inositol degradation into acetyl-CoA; acetyl-CoA from myo-inositol: step 2/7. Functionally, catalyzes the dehydration of inosose (2-keto-myo-inositol, 2KMI or 2,4,6/3,5-pentahydroxycyclohexanone) to 3D-(3,5/4)-trihydroxycyclohexane-1,2-dione (D-2,3-diketo-4-deoxy-epi-inositol). This chain is Inosose dehydratase 1, found in Bacillus cereus (strain ZK / E33L).